The following is a 111-amino-acid chain: Protein RnfH (111 aa).

Residues 88–111 (RRRRVQKTRESGTREGQKWLRGGA) are disordered. Positions 94–105 (KTRESGTREGQK) are enriched in basic and acidic residues.

This sequence belongs to the UPF0125 (RnfH) family.

In Cupriavidus pinatubonensis (strain JMP 134 / LMG 1197) (Cupriavidus necator (strain JMP 134)), this protein is Protein RnfH.